The following is a 699-amino-acid chain: MAYLLTFGIIAALCLASISLYRYGNIPRQHILVTLSVLTAWCFSFLIVFTIPLDVTSTLYRQCLAEHKLALDAAGNASTTANITPPPECQEPWGMVPESVFPNLWRIIYWSSQFLTWLIMPLMQSYLKAGDFTIKGKLKSALIENAIYYGSYLFICGVLLIYIAVKGVPLDWQKLKAIASSASNTWGLFLLILLLGYALVEVPRSLWNNAKPGFTLQYAYFKAAKLSTDKAEAEEHVDDILESLQCISRVVPNNHELRPCVETIMRKVPIELQERASRNFSRTGGSGMGATSSTILPSEKALVRIHKQVIKSLQTLQRTEALWSVQVDTVLHLEDVARNIHSAERRFKSEFPRQRTQLERIFYSATLQWYWECLLKAPFLKTLCVVTATMSAMVVWSEVTFFSRDPVLSIFANVIYLAKESYDFFTIEVFSMMVLCYFFYCTYSTILRIRFLNLYYLAPHHQTNEHSLIFSGMLLCRLTPPMCLNFLGLIHMDSHIIPERMMETYYTRIMGHMDVIGIISNGFNIYFPMCMLAFCLSTWFSLGSRALNALGFQQFLQNETIATELVQEGKDLIAREKRRRQRAEEAMARRRDFNRPDPTVASNDYMNKYRSGAGALAGSRTPADGLLRDGDGSFDYAAVASSSALGVPRSLSEEINDRFGVSTQMQVGFRGTSELDPDYEAENERRIVGPPPRGLFDDV.

Residues 1–3 (MAY) are Extracellular-facing. Residues 4-26 (LLTFGIIAALCLASISLYRYGNI) form a helical membrane-spanning segment. Residues 27 to 30 (PRQH) are Cytoplasmic-facing. The chain crosses the membrane as a helical span at residues 31 to 51 (ILVTLSVLTAWCFSFLIVFTI). Topologically, residues 52–106 (PLDVTSTLYRQCLAEHKLALDAAGNASTTANITPPPECQEPWGMVPESVFPNLWR) are extracellular. N-linked (GlcNAc...) asparagine glycosylation occurs at Asn76. A helical membrane pass occupies residues 107 to 127 (IIYWSSQFLTWLIMPLMQSYL). The Cytoplasmic portion of the chain corresponds to 128–144 (KAGDFTIKGKLKSALIE). The chain crosses the membrane as a helical span at residues 145–165 (NAIYYGSYLFICGVLLIYIAV). Residues 166-181 (KGVPLDWQKLKAIASS) are Extracellular-facing. A helical transmembrane segment spans residues 182–202 (ASNTWGLFLLILLLGYALVEV). Topologically, residues 203–381 (PRSLWNNAKP…ECLLKAPFLK (179 aa)) are cytoplasmic. The chain crosses the membrane as a helical span at residues 382–402 (TLCVVTATMSAMVVWSEVTFF). Topologically, residues 403-426 (SRDPVLSIFANVIYLAKESYDFFT) are extracellular. The helical transmembrane segment at 427-447 (IEVFSMMVLCYFFYCTYSTIL) threads the bilayer. The Cytoplasmic portion of the chain corresponds to 448–467 (RIRFLNLYYLAPHHQTNEHS). A helical transmembrane segment spans residues 468–488 (LIFSGMLLCRLTPPMCLNFLG). At 489 to 514 (LIHMDSHIIPERMMETYYTRIMGHMD) the chain is on the extracellular side. A helical membrane pass occupies residues 515-535 (VIGIISNGFNIYFPMCMLAFC). Over 536–699 (LSTWFSLGSR…PPPRGLFDDV (164 aa)) the chain is Cytoplasmic. Positions 564-592 (ELVQEGKDLIAREKRRRQRAEEAMARRRD) form a coiled coil. Positions 669-699 (FRGTSELDPDYEAENERRIVGPPPRGLFDDV) are disordered.

It belongs to the LIMR family.

The protein localises to the membrane. This Drosophila pseudoobscura pseudoobscura (Fruit fly) protein is LMBR1 domain-containing protein 2 homolog.